The following is a 485-amino-acid chain: Glycogen synthase (485 aa).

K15 is an ADP-alpha-D-glucose binding site.

The protein belongs to the glycosyltransferase 1 family. Bacterial/plant glycogen synthase subfamily.

It catalyses the reaction [(1-&gt;4)-alpha-D-glucosyl](n) + ADP-alpha-D-glucose = [(1-&gt;4)-alpha-D-glucosyl](n+1) + ADP + H(+). The protein operates within glycan biosynthesis; glycogen biosynthesis. Functionally, synthesizes alpha-1,4-glucan chains using ADP-glucose. In Fervidobacterium nodosum (strain ATCC 35602 / DSM 5306 / Rt17-B1), this protein is Glycogen synthase.